The primary structure comprises 423 residues: Probable sucrose-phosphate synthase (423 aa).

The protein belongs to the glycosyltransferase 1 family.

It catalyses the reaction beta-D-fructose 6-phosphate + UDP-alpha-D-glucose = sucrose 6(F)-phosphate + UDP + H(+). Plays a role in sucrose synthesis by catalyzing the first step of sucrose biosynthesis from UDP-glucose and fructose-6-phosphate. This is Probable sucrose-phosphate synthase from Thermosipho melanesiensis (strain DSM 12029 / CIP 104789 / BI429).